Here is a 583-residue protein sequence, read N- to C-terminus: 2-succinyl-5-enolpyruvyl-6-hydroxy-3-cyclohexene-1-carboxylate synthase (583 aa).

The protein belongs to the TPP enzyme family. MenD subfamily. In terms of assembly, homodimer. Mg(2+) is required as a cofactor. It depends on Mn(2+) as a cofactor. Requires thiamine diphosphate as cofactor.

The catalysed reaction is isochorismate + 2-oxoglutarate + H(+) = 5-enolpyruvoyl-6-hydroxy-2-succinyl-cyclohex-3-ene-1-carboxylate + CO2. Its pathway is quinol/quinone metabolism; 1,4-dihydroxy-2-naphthoate biosynthesis; 1,4-dihydroxy-2-naphthoate from chorismate: step 2/7. It functions in the pathway quinol/quinone metabolism; menaquinone biosynthesis. In terms of biological role, catalyzes the thiamine diphosphate-dependent decarboxylation of 2-oxoglutarate and the subsequent addition of the resulting succinic semialdehyde-thiamine pyrophosphate anion to isochorismate to yield 2-succinyl-5-enolpyruvyl-6-hydroxy-3-cyclohexene-1-carboxylate (SEPHCHC). The protein is 2-succinyl-5-enolpyruvyl-6-hydroxy-3-cyclohexene-1-carboxylate synthase of Chlorobium luteolum (strain DSM 273 / BCRC 81028 / 2530) (Pelodictyon luteolum).